We begin with the raw amino-acid sequence, 445 residues long: Phosphoglucosamine mutase (445 aa).

Ser102 serves as the catalytic Phosphoserine intermediate. Positions 102, 241, 243, and 245 each coordinate Mg(2+). Residue Ser102 is modified to Phosphoserine.

The protein belongs to the phosphohexose mutase family. Mg(2+) is required as a cofactor. Post-translationally, activated by phosphorylation.

It carries out the reaction alpha-D-glucosamine 1-phosphate = D-glucosamine 6-phosphate. In terms of biological role, catalyzes the conversion of glucosamine-6-phosphate to glucosamine-1-phosphate. The chain is Phosphoglucosamine mutase from Rhodococcus erythropolis (strain PR4 / NBRC 100887).